The following is a 395-amino-acid chain: Phosphoribulokinase, chloroplastic (395 aa).

The transit peptide at 1–46 (MAVSTIYSTQALNSTHFLTSSSSSKQVFLYRRQPQTNRRFNTLITC) directs the protein to the chloroplast. The cysteines at positions 61 and 100 are disulfide-linked.

Belongs to the phosphoribulokinase family.

The protein resides in the plastid. It is found in the chloroplast. It catalyses the reaction D-ribulose 5-phosphate + ATP = D-ribulose 1,5-bisphosphate + ADP + H(+). It functions in the pathway carbohydrate biosynthesis; Calvin cycle. Light regulated via thioredoxin by reversible oxidation/reduction of sulfhydryl/disulfide groups. The sequence is that of Phosphoribulokinase, chloroplastic from Arabidopsis thaliana (Mouse-ear cress).